The sequence spans 554 residues: Thermosome subunit beta (554 aa).

The segment at 532–554 (GKKSGSEPSGKKEKDKEEKSSED) is disordered. The segment covering 540-554 (SGKKEKDKEEKSSED) has biased composition (basic and acidic residues).

This sequence belongs to the TCP-1 chaperonin family. In terms of assembly, forms a Heterooligomeric complex of two stacked eight-membered rings.

Molecular chaperone; binds unfolded polypeptides in vitro, and has a weak ATPase activity. This is Thermosome subunit beta (thsB) from Saccharolobus solfataricus (strain ATCC 35092 / DSM 1617 / JCM 11322 / P2) (Sulfolobus solfataricus).